The following is a 119-amino-acid chain: Large ribosomal subunit protein bL20 (119 aa).

The protein belongs to the bacterial ribosomal protein bL20 family.

Its function is as follows. Binds directly to 23S ribosomal RNA and is necessary for the in vitro assembly process of the 50S ribosomal subunit. It is not involved in the protein synthesizing functions of that subunit. This is Large ribosomal subunit protein bL20 from Lactococcus lactis subsp. cremoris (strain MG1363).